Reading from the N-terminus, the 483-residue chain is tRNA-2-methylthio-N(6)-dimethylallyladenosine synthase (483 aa).

The MTTase N-terminal domain maps to 31-148 (KKLYIETQGC…LPQMLDQHQD (118 aa)). [4Fe-4S] cluster contacts are provided by C40, C77, C111, C192, C196, and C199. The 233-residue stretch at 178-410 (RVEGFKAFVS…QHWIKQSSIR (233 aa)) folds into the Radical SAM core domain. The region spanning 413 to 477 (DAMQGTIQRV…LNLVYGELLN (65 aa)) is the TRAM domain.

This sequence belongs to the methylthiotransferase family. MiaB subfamily. Monomer. It depends on [4Fe-4S] cluster as a cofactor.

It localises to the cytoplasm. The enzyme catalyses N(6)-dimethylallyladenosine(37) in tRNA + (sulfur carrier)-SH + AH2 + 2 S-adenosyl-L-methionine = 2-methylsulfanyl-N(6)-dimethylallyladenosine(37) in tRNA + (sulfur carrier)-H + 5'-deoxyadenosine + L-methionine + A + S-adenosyl-L-homocysteine + 2 H(+). Catalyzes the methylthiolation of N6-(dimethylallyl)adenosine (i(6)A), leading to the formation of 2-methylthio-N6-(dimethylallyl)adenosine (ms(2)i(6)A) at position 37 in tRNAs that read codons beginning with uridine. This is tRNA-2-methylthio-N(6)-dimethylallyladenosine synthase from Acinetobacter baylyi (strain ATCC 33305 / BD413 / ADP1).